A 181-amino-acid chain; its full sequence is CDP-archaeol synthase (181 aa).

Transmembrane regions (helical) follow at residues 7 to 27 (VVVAVWAMLPAYVPNNAAVLA), 55 to 75 (AVGTAAGVALAVALNALRPAA), 80 to 100 (GVVLPAFPPAAMGTLAFGAMV), 128 to 148 (FVVVALALTALAVPAWVGDTF), and 150 to 170 (LPVLVTVAVLTPALHLLTNGI).

The protein belongs to the CDP-archaeol synthase family. Mg(2+) is required as a cofactor.

It is found in the cell membrane. It catalyses the reaction 2,3-bis-O-(geranylgeranyl)-sn-glycerol 1-phosphate + CTP + H(+) = CDP-2,3-bis-O-(geranylgeranyl)-sn-glycerol + diphosphate. It functions in the pathway membrane lipid metabolism; glycerophospholipid metabolism. In terms of biological role, catalyzes the formation of CDP-2,3-bis-(O-geranylgeranyl)-sn-glycerol (CDP-archaeol) from 2,3-bis-(O-geranylgeranyl)-sn-glycerol 1-phosphate (DGGGP) and CTP. This reaction is the third ether-bond-formation step in the biosynthesis of archaeal membrane lipids. This is CDP-archaeol synthase from Halobacterium salinarum (strain ATCC 29341 / DSM 671 / R1).